We begin with the raw amino-acid sequence, 706 residues long: MNSLFASTARGLEELLKSELEALGAHDCKIVQGGVHFQGDDRLMYQSLLWSRLASRILLPLNEFKVYSDLDLYLGVQAIDWPSIFGVDKTFAVHFSGVNDEIRNSQYGALKVKDAIVDSFTRKMDQRPTVAKQQPDIRVNVFLQRDMASVALDLSGEGLHQRGYRDLTGQAPLKENLAAAIIQRSGWQPGTPMVDPMCGSGTLLIEAAMMASDRAPGLHRGHWGFTAWSAFNEALWRELTTEAQVRARRGLLETSSRFFGSDIDRRVIEMARANARRAGVAELITFNANDISKLVNPLPEGPVGTVISNPPYGERLESEPALIALHNMFGRMMKTAFGGWRLSLFSASPELLSCLQLRADREFKAKNGPLDCVQKNYQLTANPQGAGGALVAEDYANRLRKNVKKLDKWAKQQGIECYRLYDADLPDYNVAVDRYGSKVVVQEYAPPKTIDPQKARQRLFDVINATLAVLELPSNQLVLKTRERQKGKNQYEKLAQKGEFLLVSEYNAKLWVNLTDYLDTGLFLDHRIARQMLGKMSQGKDFLNLFAYTGTASVHAGLGGARSTTTVDMSRTYLEWAEKNLRVNGLTGQQHRLIQADCLSWLSNTDEQFDVIFIDPPTFSNSKRMETTFDVQRDHLVLMKELKRLLRRKGTIMFSNNKRGFQMDLAGIAALGLEAKEITALTQSEDFARNRQIHNCWLVTHSQEEK.

A THUMP domain is found at 43-154; it reads LMYQSLLWSR…RDMASVALDL (112 aa).

It belongs to the methyltransferase superfamily. RlmKL family.

Its subcellular location is the cytoplasm. It carries out the reaction guanosine(2445) in 23S rRNA + S-adenosyl-L-methionine = N(2)-methylguanosine(2445) in 23S rRNA + S-adenosyl-L-homocysteine + H(+). The enzyme catalyses guanosine(2069) in 23S rRNA + S-adenosyl-L-methionine = N(2)-methylguanosine(2069) in 23S rRNA + S-adenosyl-L-homocysteine + H(+). In terms of biological role, specifically methylates the guanine in position 2445 (m2G2445) and the guanine in position 2069 (m7G2069) of 23S rRNA. This chain is Ribosomal RNA large subunit methyltransferase K/L, found in Yersinia pseudotuberculosis serotype IB (strain PB1/+).